We begin with the raw amino-acid sequence, 462 residues long: Glutamate--tRNA ligase (462 aa).

Residues 11-21 (PSPTGFIHLGN) carry the 'HIGH' region motif. The span at 120 to 131 (KPRYDGTWRPEP) shows a compositional bias: basic and acidic residues. Residues 120 to 140 (KPRYDGTWRPEPGKTLPPIPA) form a disordered region. The short motif at 243–247 (KMSKR) is the 'KMSKS' region element. Lys-246 lines the ATP pocket.

It belongs to the class-I aminoacyl-tRNA synthetase family. Glutamate--tRNA ligase type 1 subfamily. As to quaternary structure, monomer.

The protein resides in the cytoplasm. It carries out the reaction tRNA(Glu) + L-glutamate + ATP = L-glutamyl-tRNA(Glu) + AMP + diphosphate. Catalyzes the attachment of glutamate to tRNA(Glu) in a two-step reaction: glutamate is first activated by ATP to form Glu-AMP and then transferred to the acceptor end of tRNA(Glu). This chain is Glutamate--tRNA ligase, found in Polaromonas sp. (strain JS666 / ATCC BAA-500).